The sequence spans 197 residues: Potassium-transporting ATPase KdpC subunit (197 aa).

A helical transmembrane segment spans residues 9–29; it reads LVVTLLLAALLCGAYPVLVTG.

This sequence belongs to the KdpC family. The system is composed of three essential subunits: KdpA, KdpB and KdpC.

The protein localises to the cell inner membrane. Its function is as follows. Part of the high-affinity ATP-driven potassium transport (or Kdp) system, which catalyzes the hydrolysis of ATP coupled with the electrogenic transport of potassium into the cytoplasm. This subunit acts as a catalytic chaperone that increases the ATP-binding affinity of the ATP-hydrolyzing subunit KdpB by the formation of a transient KdpB/KdpC/ATP ternary complex. The sequence is that of Potassium-transporting ATPase KdpC subunit from Nitratidesulfovibrio vulgaris (strain DSM 19637 / Miyazaki F) (Desulfovibrio vulgaris).